Here is a 117-residue protein sequence, read N- to C-terminus: Large ribosomal subunit protein eL8 (117 aa).

The protein belongs to the eukaryotic ribosomal protein eL8 family. In terms of assembly, part of the 50S ribosomal subunit. Part of the RNase P complex.

It is found in the cytoplasm. The catalysed reaction is Endonucleolytic cleavage of RNA, removing 5'-extranucleotides from tRNA precursor.. In terms of biological role, multifunctional RNA-binding protein that recognizes the K-turn motif in ribosomal RNA, the RNA component of RNase P, box H/ACA, box C/D and box C'/D' sRNAs. Part of ribonuclease P, a protein complex that generates mature tRNA molecules by cleaving their 5'-ends, this subunit dramatically stimulates RNase P activity. The sequence is that of Large ribosomal subunit protein eL8 from Methanococcus maripaludis (strain DSM 14266 / JCM 13030 / NBRC 101832 / S2 / LL).